The following is a 695-amino-acid chain: Exocyst complex component EXO70C2 (695 aa).

Positions 1–36 are enriched in basic and acidic residues; it reads MEKNDKDPDHDDKSKGDEKGDVVSDAHPSDDAHHQD. 2 disordered regions span residues 1–71 and 210–229; these read MEKN…EEAP and VVTD…QDHQ. Residue T212 is modified to Phosphothreonine. A phosphoserine mark is found at S215 and S217. T446 carries the post-translational modification Phosphothreonine. Phosphoserine is present on residues S494 and S605.

This sequence belongs to the EXO70 family. As to quaternary structure, interacts with ROH1A and ROH1D independently of its phosphorylation status. Post-translationally, phosphorylation on Ser and Thr residues promotes its ability to repress pollen tube growth and to regulate cellular architecture at the pollen tube tip. In terms of tissue distribution, expressed in anthers, pollen and root trichoblast cells. Also observed in anther tapetum.

It localises to the cytoplasm. Required for optimal tip growth of pollen tube; dose-dependent negative regulator of exocyst function in pollen tube growth and cellular architecture at the pollen tube tip, probably by modulating membrane trafficking and exocytosis dynamics. The sequence is that of Exocyst complex component EXO70C2 from Arabidopsis thaliana (Mouse-ear cress).